The following is a 342-amino-acid chain: Isopentenyl-diphosphate delta-isomerase (342 aa).

11 to 12 serves as a coordination point for substrate; the sequence is RK. Residues Ser68, 69–71, Ser99, and Asn128 each bind FMN; that span reads SMT. 99 to 101 is a substrate binding site; it reads SQR. Position 162 (Gln162) interacts with substrate. Glu163 contributes to the Mg(2+) binding site. FMN is bound by residues Lys194, Ser219, Thr224, 275-277, and 296-297; these read GVR and AK.

The protein belongs to the IPP isomerase type 2 family. Homooctamer. Dimer of tetramers. It depends on FMN as a cofactor. NADPH serves as cofactor. Mg(2+) is required as a cofactor.

It is found in the cytoplasm. The catalysed reaction is isopentenyl diphosphate = dimethylallyl diphosphate. Involved in the biosynthesis of isoprenoids. Catalyzes the 1,3-allylic rearrangement of the homoallylic substrate isopentenyl (IPP) to its allylic isomer, dimethylallyl diphosphate (DMAPP). This is Isopentenyl-diphosphate delta-isomerase from Legionella pneumophila (strain Corby).